A 147-amino-acid chain; its full sequence is Large ribosomal subunit protein uL16 (147 aa).

Belongs to the universal ribosomal protein uL16 family. Part of the 50S ribosomal subunit.

Its function is as follows. Binds 23S rRNA and is also seen to make contacts with the A and possibly P site tRNAs. In Clostridium botulinum (strain ATCC 19397 / Type A), this protein is Large ribosomal subunit protein uL16.